Consider the following 357-residue polypeptide: Dihydroorotate dehydrogenase (quinone) (357 aa).

Residues 66–70 (AGFDK) and Thr90 contribute to the FMN site. A substrate-binding site is contributed by Lys70. 115-119 (NRMGF) is a binding site for substrate. Positions 143 and 176 each coordinate FMN. Residue Asn176 participates in substrate binding. The active-site Nucleophile is the Ser179. Asn181 is a binding site for substrate. FMN contacts are provided by Lys212 and Thr240. Position 241-242 (241-242 (NT)) interacts with substrate. FMN-binding positions include Gly264, Gly293, and 314–315 (YT).

This sequence belongs to the dihydroorotate dehydrogenase family. Type 2 subfamily. In terms of assembly, monomer. Requires FMN as cofactor.

The protein resides in the cell membrane. It catalyses the reaction (S)-dihydroorotate + a quinone = orotate + a quinol. Its pathway is pyrimidine metabolism; UMP biosynthesis via de novo pathway; orotate from (S)-dihydroorotate (quinone route): step 1/1. Catalyzes the conversion of dihydroorotate to orotate with quinone as electron acceptor. In Mycobacterium bovis (strain BCG / Pasteur 1173P2), this protein is Dihydroorotate dehydrogenase (quinone).